A 349-amino-acid chain; its full sequence is Protein-glutamate methylesterase/protein-glutamine glutaminase (349 aa).

The 118-residue stretch at 5-122 (RVLSVDDSAL…REGMLAYSEM (118 aa)) folds into the Response regulatory domain. Aspartate 56 carries the 4-aspartylphosphate modification. Residues 152–344 (LLSSEKLIAI…QQMLAKISAG (193 aa)) enclose the CheB-type methylesterase domain. Active-site residues include serine 164, histidine 190, and aspartate 286.

This sequence belongs to the CheB family. Post-translationally, phosphorylated by CheA. Phosphorylation of the N-terminal regulatory domain activates the methylesterase activity.

It localises to the cytoplasm. The enzyme catalyses [protein]-L-glutamate 5-O-methyl ester + H2O = L-glutamyl-[protein] + methanol + H(+). The catalysed reaction is L-glutaminyl-[protein] + H2O = L-glutamyl-[protein] + NH4(+). Involved in chemotaxis. Part of a chemotaxis signal transduction system that modulates chemotaxis in response to various stimuli. Catalyzes the demethylation of specific methylglutamate residues introduced into the chemoreceptors (methyl-accepting chemotaxis proteins or MCP) by CheR. Also mediates the irreversible deamidation of specific glutamine residues to glutamic acid. The polypeptide is Protein-glutamate methylesterase/protein-glutamine glutaminase (Salmonella paratyphi A (strain ATCC 9150 / SARB42)).